Reading from the N-terminus, the 71-residue chain is ATP synthase F(0) complex subunit e, mitochondrial (71 aa).

Lys34 is modified (N6-acetyllysine). Ser68 carries the post-translational modification Phosphoserine.

The protein belongs to the ATPase e subunit family. Component of the ATP synthase complex composed at least of ATP5F1A/subunit alpha, ATP5F1B/subunit beta, ATP5MC1/subunit c (homooctomer), MT-ATP6/subunit a, MT-ATP8/subunit 8, ATP5ME/subunit e, ATP5MF/subunit f, ATP5MG/subunit g, ATP5MK/subunit k, ATP5MJ/subunit j, ATP5F1C/subunit gamma, ATP5F1D/subunit delta, ATP5F1E/subunit epsilon, ATP5PF/subunit F6, ATP5PB/subunit b, ATP5PD/subunit d, ATP5PO/subunit OSCP. ATP synthase complex consists of a soluble F(1) head domain (subunits alpha(3) and beta(3)) - the catalytic core - and a membrane F(0) domain - the membrane proton channel (subunits c, a, 8, e, f, g, k and j). These two domains are linked by a central stalk (subunits gamma, delta, and epsilon) rotating inside the F1 region and a stationary peripheral stalk (subunits F6, b, d, and OSCP).

It localises to the mitochondrion. It is found in the mitochondrion inner membrane. Its function is as follows. Subunit e, of the mitochondrial membrane ATP synthase complex (F(1)F(0) ATP synthase or Complex V) that produces ATP from ADP in the presence of a proton gradient across the membrane which is generated by electron transport complexes of the respiratory chain. ATP synthase complex consist of a soluble F(1) head domain - the catalytic core - and a membrane F(1) domain - the membrane proton channel. These two domains are linked by a central stalk rotating inside the F(1) region and a stationary peripheral stalk. During catalysis, ATP synthesis in the catalytic domain of F(1) is coupled via a rotary mechanism of the central stalk subunits to proton translocation. In vivo, can only synthesize ATP although its ATP hydrolase activity can be activated artificially in vitro. Part of the complex F(0) domain. This Rattus norvegicus (Rat) protein is ATP synthase F(0) complex subunit e, mitochondrial.